The primary structure comprises 483 residues: WAS/WASL-interacting protein family member 3 (483 aa).

Over residues 1–29 the composition is skewed to pro residues; that stretch reads MPVPPPPPPPLPPPPPPLGAPPPPPPSAP. Residues 1-414 are disordered; it reads MPVPPPPPPP…GGQLRNGSLH (414 aa). 3 consecutive short sequence motifs (profilin-binding motif) follow at residues 3 to 8, 11 to 16, and 20 to 25; these read VPPPPP, LPPPPP, and APPPPP. Residues 45 to 62 form the WH2 domain; the sequence is GRSALLADIQQGTRLRKV. The residue at position 46 (R46) is an Asymmetric dimethylarginine. Positions 58–61 match the RLRK motif; it reads RLRK. Polar residues-rich tracts occupy residues 63-78 and 87-96; these read TQIN…SSKG and ANTRGASTPP. Position 149 is a phosphoserine (S149). The span at 166–192 shows a compositional bias: pro residues; that stretch reads PPRPNVPAPPPPTPPPPPPPLPPPLPS. S202 is subject to Phosphoserine. Pro residues-rich tracts occupy residues 215–239 and 256–271; these read VAPP…PLPP and HLPP…PPCG. Low complexity predominate over residues 277 to 288; it reads AEPASPAQDAQE. The span at 289–298 shows a compositional bias: pro residues; sequence PPAPPPPLPP. 2 stretches are compositionally biased toward low complexity: residues 299–308 and 331–345; these read YASCSPRASL and PSFQ…AQAL. Phosphoserine is present on S383. Positions 393–404 are enriched in low complexity; that stretch reads QQATAWTPTQQP. The WASP-binding motif signature appears at 424 to 448; it reads TFHSVEDFPPPDEYKPCQKIYPSKI. The tract at residues 461–483 is disordered; that stretch reads EAVGQSSDDIKGRNSQLSLKTLR. Positions 473–483 are enriched in polar residues; it reads RNSQLSLKTLR.

Belongs to the verprolin family. In terms of assembly, interacts with WASL, and monomeric and filamentous actin.

It localises to the cytoplasm. Its function is as follows. May be a regulator of cytoskeletal organization. May have a role in spermatogenesis. In Homo sapiens (Human), this protein is WAS/WASL-interacting protein family member 3 (WIPF3).